A 371-amino-acid polypeptide reads, in one-letter code: Queuine tRNA-ribosyltransferase (371 aa).

Asp-90 (proton acceptor) is an active-site residue. Substrate is bound by residues 90-94 (DSGGF), Asp-144, Gln-188, and Gly-215. An RNA binding region spans residues 246–252 (GVGTPED). Residue Asp-265 is the Nucleophile of the active site. An RNA binding; important for wobble base 34 recognition region spans residues 270–274 (TRNAR). Cys-303, Cys-305, Cys-308, and His-334 together coordinate Zn(2+).

It belongs to the queuine tRNA-ribosyltransferase family. As to quaternary structure, homodimer. Within each dimer, one monomer is responsible for RNA recognition and catalysis, while the other monomer binds to the replacement base PreQ1. Zn(2+) is required as a cofactor.

It catalyses the reaction 7-aminomethyl-7-carbaguanine + guanosine(34) in tRNA = 7-aminomethyl-7-carbaguanosine(34) in tRNA + guanine. It participates in tRNA modification; tRNA-queuosine biosynthesis. In terms of biological role, catalyzes the base-exchange of a guanine (G) residue with the queuine precursor 7-aminomethyl-7-deazaguanine (PreQ1) at position 34 (anticodon wobble position) in tRNAs with GU(N) anticodons (tRNA-Asp, -Asn, -His and -Tyr). Catalysis occurs through a double-displacement mechanism. The nucleophile active site attacks the C1' of nucleotide 34 to detach the guanine base from the RNA, forming a covalent enzyme-RNA intermediate. The proton acceptor active site deprotonates the incoming PreQ1, allowing a nucleophilic attack on the C1' of the ribose to form the product. After dissociation, two additional enzymatic reactions on the tRNA convert PreQ1 to queuine (Q), resulting in the hypermodified nucleoside queuosine (7-(((4,5-cis-dihydroxy-2-cyclopenten-1-yl)amino)methyl)-7-deazaguanosine). The sequence is that of Queuine tRNA-ribosyltransferase from Neisseria gonorrhoeae (strain NCCP11945).